The sequence spans 61 residues: Adipokinetic prohormone type 2 (61 aa).

The signal sequence occupies residues 1–22 (MRQGCALTLMLLVVVCAALSAA). Gln23 bears the Pyrrolidone carboxylic acid mark. The residue at position 30 (Trp30) is a Tryptophan amide.

It belongs to the AKH/HRTH/RPCH family. As to quaternary structure, adipokinetic hormone precursor-related peptide (APRP) can form three type of disulfide-bond dimers: p1 (alpha-alpha), p2 (alpha-beta), and p3 (beta-beta).

The protein localises to the secreted. This hormone, released from cells in the corpora cardiaca, causes release of diglycerides from the fat body and stimulation of muscles to use these diglycerides as an energy source during energy-demanding processes. This Schistocerca nitens (Vagrant locust) protein is Adipokinetic prohormone type 2.